The primary structure comprises 209 residues: Thiamine-phosphate synthase (209 aa).

4-amino-2-methyl-5-(diphosphooxymethyl)pyrimidine-binding positions include 32-36 (QLRMK) and Asp64. The Mg(2+) site is built by Asp65 and Asp84. Position 103 (Thr103) interacts with 4-amino-2-methyl-5-(diphosphooxymethyl)pyrimidine. 129–131 (TTT) provides a ligand contact to 2-[(2R,5Z)-2-carboxy-4-methylthiazol-5(2H)-ylidene]ethyl phosphate. Lys132 provides a ligand contact to 4-amino-2-methyl-5-(diphosphooxymethyl)pyrimidine. 2-[(2R,5Z)-2-carboxy-4-methylthiazol-5(2H)-ylidene]ethyl phosphate is bound at residue Gly165.

Belongs to the thiamine-phosphate synthase family. Mg(2+) is required as a cofactor.

It carries out the reaction 2-[(2R,5Z)-2-carboxy-4-methylthiazol-5(2H)-ylidene]ethyl phosphate + 4-amino-2-methyl-5-(diphosphooxymethyl)pyrimidine + 2 H(+) = thiamine phosphate + CO2 + diphosphate. The catalysed reaction is 2-(2-carboxy-4-methylthiazol-5-yl)ethyl phosphate + 4-amino-2-methyl-5-(diphosphooxymethyl)pyrimidine + 2 H(+) = thiamine phosphate + CO2 + diphosphate. It catalyses the reaction 4-methyl-5-(2-phosphooxyethyl)-thiazole + 4-amino-2-methyl-5-(diphosphooxymethyl)pyrimidine + H(+) = thiamine phosphate + diphosphate. It functions in the pathway cofactor biosynthesis; thiamine diphosphate biosynthesis; thiamine phosphate from 4-amino-2-methyl-5-diphosphomethylpyrimidine and 4-methyl-5-(2-phosphoethyl)-thiazole: step 1/1. In terms of biological role, condenses 4-methyl-5-(beta-hydroxyethyl)thiazole monophosphate (THZ-P) and 2-methyl-4-amino-5-hydroxymethyl pyrimidine pyrophosphate (HMP-PP) to form thiamine monophosphate (TMP). This chain is Thiamine-phosphate synthase, found in Bacteroides thetaiotaomicron (strain ATCC 29148 / DSM 2079 / JCM 5827 / CCUG 10774 / NCTC 10582 / VPI-5482 / E50).